Consider the following 202-residue polypeptide: Small ribosomal subunit protein uS4 (202 aa).

The region spanning 90-152 (MRLDNTVFRL…ERSRRLVETN (63 aa)) is the S4 RNA-binding domain.

It belongs to the universal ribosomal protein uS4 family. As to quaternary structure, part of the 30S ribosomal subunit. Contacts protein S5. The interaction surface between S4 and S5 is involved in control of translational fidelity.

Functionally, one of the primary rRNA binding proteins, it binds directly to 16S rRNA where it nucleates assembly of the body of the 30S subunit. Its function is as follows. With S5 and S12 plays an important role in translational accuracy. This is Small ribosomal subunit protein uS4 from Thermosynechococcus vestitus (strain NIES-2133 / IAM M-273 / BP-1).